The chain runs to 477 residues: Polyketide synthase-related protein Dhc1 (477 aa).

Residues 34–112 (EKMTVREGEL…AMTHCVFDRA (79 aa)) enclose the Carrier domain. S72 carries the O-(pantetheine 4'-phosphoryl)serine modification. Residues 161–322 (LTGATSFLGS…AGEVFLENLV (162 aa)) are ketoreductase (KR) domain. The disordered stretch occupies residues 410-435 (VQQQQQQQQRQSQPPRDDAADGSPTE). The span at 411 to 422 (QQQQQQQQRQSQ) shows a compositional bias: low complexity. Basic and acidic residues predominate over residues 424–435 (PRDDAADGSPTE).

Its pathway is mycotoxin biosynthesis. Its function is as follows. Polyketide synthase-related protein; part of the gene cluster that mediates the biosynthesis of 10,11-dehydrocurvularin, a prevalent fungal phytotoxin with heat shock response and immune-modulatory activities. The highly reducing polyketide synthase Dhc3 is responsible for biosynthesis up to the tetraketide stage. The non-reducing polyketide synthase Dhc5 then conducts four additional chain extension cycles, producing the unreduced part of the nascent octaketide from C-1 to C-8 in 10,11-dehydrocurvularin. The role of Dhc1 in 10,11-dehydrocurvularin biosynthesis has not been identified yet. The chain is Polyketide synthase-related protein Dhc1 from Alternaria cinerariae.